A 177-amino-acid polypeptide reads, in one-letter code: Early nodulin-like protein 6 (177 aa).

Positions 1-23 are cleaved as a signal peptide; that stretch reads MGGQKIVLLSIFVCFYVFSLVSC. The Phytocyanin domain maps to 24–127; the sequence is TEFEAGGENG…GQKMIIKVME (104 aa). A glycan (N-linked (GlcNAc...) asparagine) is linked at N41. An intrachain disulfide couples C81 to C115. Residue N149 is the site of GPI-anchor amidated asparagine attachment. The propeptide at 150–177 is removed in mature form; that stretch reads HAVRKTSRFLGAGLVTISILVITVFSLV.

This sequence belongs to the early nodulin-like (ENODL) family. Confined to flowers.

It is found in the cell membrane. May act as a carbohydrate transporter. The polypeptide is Early nodulin-like protein 6 (Arabidopsis thaliana (Mouse-ear cress)).